A 322-amino-acid polypeptide reads, in one-letter code: uncharacterized protein (322 aa).

The tract at residues 277–322 (LVTYGGKDGPSDNEDGPSDDEDGPSDDEEGLSKDGVSEYYQSDLDD) is disordered. Over residues 287–305 (SDNEDGPSDDEDGPSDDEE) the composition is skewed to acidic residues.

This is an uncharacterized protein from Frog virus 3 (isolate Goorha) (FV-3).